The sequence spans 303 residues: N-acetyl-D-glucosamine kinase (303 aa).

ATP-binding positions include G4–K11 and G133–F140. Positions 157, 177, 179, and 184 each coordinate Zn(2+).

This sequence belongs to the ROK (NagC/XylR) family. NagK subfamily.

It carries out the reaction N-acetyl-D-glucosamine + ATP = N-acetyl-D-glucosamine 6-phosphate + ADP + H(+). Its pathway is cell wall biogenesis; peptidoglycan recycling. In terms of biological role, catalyzes the phosphorylation of N-acetyl-D-glucosamine (GlcNAc) derived from cell-wall degradation, yielding GlcNAc-6-P. The chain is N-acetyl-D-glucosamine kinase from Escherichia coli O139:H28 (strain E24377A / ETEC).